Here is a 672-residue protein sequence, read N- to C-terminus: Forkhead box protein O3 (672 aa).

Disordered regions lie at residues 1 to 85 and 110 to 152; these read MAEA…GVSS and GPAS…CSSR. Ser30 carries the post-translational modification Phosphoserine. Thr32 is modified (phosphothreonine). Lys46 carries the post-translational modification N6-methyllysine. Positions 57-68 are enriched in acidic residues; it reads IPEEDDDEDDED. The segment at 80 to 108 is required for mitochondrial import; the sequence is GGGVSSTLGSGLLLEDSAMLLAPGGQDLG. Residues 110–129 are compositionally biased toward low complexity; sequence GPASAAGALSGGTPTQLQPQ. An N6-methyllysine modification is found at Lys148. The fork-head DNA-binding region spans 156 to 250; that stretch reads WGNLSYADLI…KSGKAPRRRA (95 aa). A Phosphothreonine modification is found at Thr178. Ser208 and Ser214 each carry phosphoserine. Lys229 carries the post-translational modification N6-methyllysine. Positions 230–301 are disordered; that stretch reads SSWWIINPDG…GSPTSRSSDE (72 aa). Lys241 carries the N6-acetyllysine modification. A Nuclear localization signal motif is present at residues 241-258; sequence KSGKAPRRRAVSMDNSNK. At Ser252 the chain carries Phosphoserine. Basic residues predominate over residues 260 to 271; it reads TKSRGRAAKKKA. N6-methyllysine occurs at positions 261 and 270. Phosphoserine is present on residues Ser279 and Ser283. Over residues 282-297 the composition is skewed to polar residues; the sequence is DSPSQLSKWPGSPTSR. Lys289 is subject to N6-methyllysine. Ser293 carries the post-translational modification Phosphoserine. Ser298 is subject to Phosphoserine; by CaMK2A. A mediates interaction with CHUK/IKKA and IKBKB/IKKB region spans residues 299–672; the sequence is SDELDAWTDF…QASSQSWVPG (374 aa). Phosphoserine is present on Ser310. Residue Ser314 is modified to Phosphoserine; by SGK1. Ser398 and Ser412 each carry phosphoserine; by AMPK. Disordered stretches follow at residues 399–441 and 535–583; these read QPSP…SLNS and HQHQ…QTLS. Polar residues-rich tracts occupy residues 409–441 and 548–577; these read RGSS…SLNS and ALSN…PASQ. At Lys418 the chain carries N6-methyllysine. Ser420 is modified (phosphoserine). At Ser550 the chain carries Phosphoserine; by MAPKAPK5. At Ser554 the chain carries Phosphoserine; by AMPK and MAPKAPK5. Phosphoserine; by AMPK occurs at positions 587 and 625. Residue Ser643 is modified to Phosphoserine; by IKKB.

Upon metabolic stress, forms a complex composed of FOXO3, SIRT3 and mitochondrial RNA polymerase POLRMT; the complex is recruited to mtDNA in a SIRT3-dependent manner. Also forms a complex composed of FOXO3, SIRT3, TFAM and POLRMT. Interacts with SIRT2; the interaction occurs independently of SIRT2 deacetylase activity. Interacts with YWHAB/14-3-3-beta and YWHAZ/14-3-3-zeta, which are required for cytosolic sequestration. Upon oxidative stress, interacts with STK4/MST1, which disrupts interaction with YWHAB/14-3-3-beta and leads to nuclear translocation. Interacts with PIM1. Interacts with DDIT3/CHOP. Interacts (deacetylated form) with SKP2. Interacts with CHUK and IKBKB. Interacts with CAMK2A, CAMK2B and calcineurin A. Interacts with NUPR1; this interaction represses FOXO3 transactivation. Post-translationally, deacetylation by SIRT1 or SIRT2 stimulates interaction of FOXO3 with SKP2 and facilitates SCF(SKP2)-mediated FOXO3 ubiquitination and proteasomal degradation. Deacetylation by SIRT2 stimulates FOXO3-mediated transcriptional activity in response to oxidative stress. Deacetylated by SIRT3. Deacetylation by SIRT3 stimulates FOXO3-mediated mtDNA transcriptional activity in response to metabolic stress. In the presence of survival factors such as IGF1, phosphorylated on Thr-32 and Ser-252 by AKT1/PKB. This phosphorylated form then interacts with 14-3-3 proteins and is retained in the cytoplasm. Survival factor withdrawal induces dephosphorylation and promotes translocation to the nucleus where the dephosphorylated protein induces transcription of target genes and triggers apoptosis. Although AKT1/PKB doesn't appear to phosphorylate Ser-314 directly, it may activate other kinases that trigger phosphorylation at this residue. Phosphorylated by STK4/MST1 on Ser-208 upon oxidative stress, which leads to dissociation from YWHAB/14-3-3-beta and nuclear translocation. Phosphorylated by PIM1. Phosphorylation by AMPK leads to the activation of transcriptional activity without affecting subcellular localization. Phosphorylated by AMPK on Ser-30 in response to metabolic stress which mediates FOXO3 mitochondrial translocation. Phosphorylation by MAPKAPK5 promotes nuclear localization and DNA-binding, leading to induction of miR-34b and miR-34c expression, 2 post-transcriptional regulators of MYC that bind to the 3'UTR of MYC transcript and prevent its translation. Phosphorylated by CHUK/IKKA and IKBKB/IKKB. TNF-induced inactivation of FOXO3 requires its phosphorylation at Ser-643 by IKBKB/IKKB which promotes FOXO3 retention in the cytoplasm, polyubiquitination and ubiquitin-mediated proteasomal degradation. May be dephosphorylated by calcineurin A on Ser-298 which abolishes FOXO3 transcriptional activity. Phosphorylation at Ser-252 promotes its degradation by the proteasome. Dephosphorylation at Ser-252 by protein phosphatase 2A (PPP2CA) promotes its stabilization; interaction with PPP2CA is enhanced by AMBRA1. In terms of processing, heavily methylated by SET9 which decreases stability, while moderately increasing transcriptional activity. The main methylation site is Lys-270. Methylation doesn't affect subcellular location. Post-translationally, polyubiquitinated. Ubiquitinated by a SCF complex containing SKP2, leading to proteasomal degradation. The N-terminus is cleaved following import into the mitochondrion. Expressed in white and brown adipose tissues (at protein level). Expressed in liver, kidney, lung and colon (at protein level). Expressed in skeletal muscles (at protein level).

It localises to the cytoplasm. It is found in the cytosol. Its subcellular location is the nucleus. The protein localises to the mitochondrion matrix. The protein resides in the mitochondrion outer membrane. In terms of biological role, transcriptional activator that recognizes and binds to the DNA sequence 5'-[AG]TAAA[TC]A-3' and regulates different processes, such as apoptosis and autophagy. Acts as a positive regulator of autophagy in skeletal muscle: in starved cells, enters the nucleus following dephosphorylation and binds the promoters of autophagy genes, such as GABARAP1L, MAP1LC3B and ATG12, thereby activating their expression, resulting in proteolysis of skeletal muscle proteins. Triggers apoptosis in the absence of survival factors, including neuronal cell death upon oxidative stress. Participates in post-transcriptional regulation of MYC: following phosphorylation by MAPKAPK5, promotes induction of miR-34b and miR-34c expression, 2 post-transcriptional regulators of MYC that bind to the 3'UTR of MYC transcript and prevent its translation. In response to metabolic stress, translocates into the mitochondria where it promotes mtDNA transcription. Also acts as a key regulator of chondrogenic commitment of skeletal progenitor cells in response to lipid availability: when lipids levels are low, translocates to the nucleus and promotes expression of SOX9, which induces chondrogenic commitment and suppresses fatty acid oxidation. Also acts as a key regulator of regulatory T-cells (Treg) differentiation by activating expression of FOXP3. This Mus musculus (Mouse) protein is Forkhead box protein O3.